The sequence spans 176 residues: Ribosome rescue factor SmrB (176 aa).

A Smr domain is found at 97–172 (LDMHGMTQQE…GDGALLVLLS (76 aa)).

This sequence belongs to the SmrB family. Associates with collided ribosomes, but not with correctly translating polysomes.

Functionally, acts as a ribosome collision sensor. Detects stalled/collided disomes (pairs of ribosomes where the leading ribosome is stalled and a second ribosome has collided with it) and endonucleolytically cleaves mRNA at the 5' boundary of the stalled ribosome. Stalled/collided disomes form a new interface (primarily via the 30S subunits) that binds SmrB. Cleaved mRNA becomes available for tmRNA ligation, leading to ribosomal subunit dissociation and rescue of stalled ribosomes. The polypeptide is Ribosome rescue factor SmrB (Vibrio vulnificus (strain YJ016)).